The following is a 458-amino-acid chain: Kelch repeat and BTB domain-containing protein 13 (458 aa).

The 68-residue stretch at 7 to 74 folds into the BTB domain; the sequence is VPVQVWVDGQ…LRGERPALAA (68 aa). Kelch repeat units lie at residues 159 to 209, 210 to 258, 259 to 305, 307 to 350, and 352 to 400; these read AVST…TLGN, KLYI…GFEG, RLYA…QARG, LFVC…VAHR, and SLYV…VVRG.

As to quaternary structure, component of the BCR(KBTBD13) E3 ubiquitin ligase complex, at least composed of CUL3 and KBTBD13 and RBX1. Interacts with CUL3. Post-translationally, autoubiquitinated. In terms of tissue distribution, expressed in skeletal muscle, heart and lung.

It is found in the cytoplasm. The protein operates within protein modification; protein ubiquitination. Substrate-specific adapter of a BCR (BTB-CUL3-RBX1) E3 ubiquitin ligase complex. The polypeptide is Kelch repeat and BTB domain-containing protein 13 (Kbtbd13) (Mus musculus (Mouse)).